Consider the following 724-residue polypeptide: Peroxidase mlt-7 (724 aa).

The signal sequence occupies residues 1-24; sequence MRRLHRNLSLLFLICILNEYRIES. N-linked (GlcNAc...) asparagine glycosylation is present at asparagine 7. A propeptide spanning residues 25-178 is cleaved from the precursor; the sequence is QTLSPPITDR…GCVPQLSDVG (154 aa). One can recognise a ShKT domain in the interval 42-76; the sequence is CCDHHEWCRFWASIGECNANKDWMTENCQLACGTC. Cysteines 181 and 198 form a disulfide. Asparagine 233 is a glycosylation site (N-linked (GlcNAc...) asparagine). Histidine 271 acts as the Proton acceptor in catalysis. A Ca(2+)-binding site is contributed by aspartate 272. A disulfide bridge links cysteine 284 with cysteine 294. Threonine 335, tyrosine 337, aspartate 339, and serine 341 together coordinate Ca(2+). Residue histidine 493 participates in heme b binding. Residues asparagine 509 and asparagine 617 are each glycosylated (N-linked (GlcNAc...) asparagine). Cystine bridges form between cysteine 588/cysteine 645 and cysteine 686/cysteine 710.

This sequence belongs to the peroxidase family. The cofactor is heme b. Expressed in the hypodermal cells, specifically the head and seam/body.

The enzyme catalyses 2 a phenolic donor + H2O2 = 2 a phenolic radical donor + 2 H2O. Its function is as follows. Plays an essential role in cuticle biogenesis. Required in combination with bli-3 for correct formation of cross-links in cuticle collagens. In Caenorhabditis elegans, this protein is Peroxidase mlt-7.